Reading from the N-terminus, the 572-residue chain is MAKELKGIAASDGIAIAKAYLLVEPDLSYEKTEVTDVESEVKRFESALEVSRTELSMIREKAAKDLGEDKAQIFDAHLLVLNDPELTGPIEESIKNSKTNAETALQETTDMFIGMFESMDNEYMRERAADIKDVRKRVLSHLLGVTIPNPALIDEEVVVVAADLTPSDTAQLNRNFVKGFVTDIGGRTSHSAIMARSLEIPAVVGTKEVTASVAKNDIVIIDGLEGNVIIHPTEEQIAHYEKIKSDFALQQAEWDKLKNEKTVSKDGVHVELAANIGTPNDLEGVISNGGEAVGLYRTEFLYMGRDNFPTEEEQFEAYKAVVSGMDGKSVVVRTLDIGGDKTLPYLELPEEMNPFLGFRAIRLCFANEELFRTQLRALLRASVYGNLKIMFPMIATVNEFRQARDILLDEKAKLKAAGTEVSDSIELGIMIEIPAAAVLADQFAKEVDFFSIGTNDLIQYTMAADRMNERVSYLYQPYNPSILRLVKMVIDASHKEGKWTGMCGEMAGDQTAVPLLLGLGLDEFSMSASSILKSRSLIKRLDQSEMVKLAEEALNKSTAEEVVELVEKYTAE.

The active-site Tele-phosphohistidine intermediate is the His-190. Arg-297 and Arg-333 together coordinate phosphoenolpyruvate. Residues Glu-432 and Asp-456 each coordinate Mg(2+). Phosphoenolpyruvate is bound by residues 455–456 (ND) and Arg-466. Cys-503 acts as the Proton donor in catalysis.

Belongs to the PEP-utilizing enzyme family. Homodimer. Mg(2+) serves as cofactor.

It localises to the cytoplasm. The enzyme catalyses L-histidyl-[protein] + phosphoenolpyruvate = N(pros)-phospho-L-histidyl-[protein] + pyruvate. Functionally, general (non sugar-specific) component of the phosphoenolpyruvate-dependent sugar phosphotransferase system (sugar PTS). This major carbohydrate active-transport system catalyzes the phosphorylation of incoming sugar substrates concomitantly with their translocation across the cell membrane. Enzyme I transfers the phosphoryl group from phosphoenolpyruvate (PEP) to the phosphoryl carrier protein (HPr). The polypeptide is Phosphoenolpyruvate-protein phosphotransferase (ptsI) (Listeria monocytogenes serovar 1/2a (strain ATCC BAA-679 / EGD-e)).